Consider the following 542-residue polypeptide: Phenylacetone monooxygenase (542 aa).

FAD-binding positions include Ser-27, Glu-46, 54–57 (VWYW), Asp-66, Tyr-72, Val-119, and Gln-152. 64–66 (RCD) lines the NADP(+) pocket. Residues 194–200 (TGSSGIQ), 217–218 (RT), and 336–337 (KR) each bind NADP(+). Met-446 contacts FAD. Position 501 (Trp-501) interacts with NADP(+).

Belongs to the FAD-binding monooxygenase family. In terms of assembly, monomer. FAD serves as cofactor.

It catalyses the reaction phenylacetone + NADPH + O2 + H(+) = benzyl acetate + NADP(+) + H2O. Functionally, catalyzes a Baeyer-Villiger oxidation reaction, i.e. the insertion of an oxygen atom into a carbon-carbon bond adjacent to a carbonyl, which converts ketones to esters. Is most efficient with phenylacetone as substrate, leading to the formation of benzyl acetate. Can also oxidize other aromatic ketones (benzylacetone, alpha-methylphenylacetone and 4-hydroxyacetophenone), some aliphatic ketones (dodecan-2-one and bicyclohept-2-en-6-one) and sulfides (e.g. methyl 4-tolylsulfide). This is Phenylacetone monooxygenase (pamO) from Thermobifida fusca (strain YX).